The sequence spans 502 residues: T-complex protein 11-like X-linked protein 2 (502 aa).

The disordered stretch occupies residues 1–36; it reads MPKTEETVLQNDPSVAENGAPEPKTPGQSQKSKSFC.

Belongs to the TCP11 family.

The chain is T-complex protein 11-like X-linked protein 2 from Homo sapiens (Human).